The following is a 65-amino-acid chain: uncharacterized protein (65 aa).

Cys9 acts as the Nucleophile in catalysis. Arg15 is a catalytic residue.

Belongs to the low molecular weight phosphotyrosine protein phosphatase family.

This is an uncharacterized protein from Synechococcus sp. (strain WH8020).